The primary structure comprises 200 residues: DNA-binding protein HupB (200 aa).

Residues M1 to A90 are bacterial histone-like domain. N6-acetyllysine occurs at positions 3, 72, 86, 103, 137, 144, and 156. A degenerate repeats region region spans residues A101–K200. The disordered stretch occupies residues A179 to K200.

This sequence belongs to the bacterial histone-like protein family. Long actinobacterial subfamily. In terms of assembly, binds to human laminin-2. May also be methylated and possibly phosphorylated in vivo.

It is found in the cytoplasm. The protein resides in the nucleoid. The protein localises to the secreted. Its subcellular location is the cell wall. It localises to the cell surface. The enzyme catalyses 4 Fe(2+) + O2 + 4 H(+) = 4 Fe(3+) + 2 H2O. In terms of biological role, a nucleoid-associated protein (NAP) that plays a role in local chromosome architecture and chromosome compactation. Required for biofilm formation, stress survival and possibly in cell wall assembly, probably influences transcription. RNase E and HupB jointly contribute to cellular adaptation to changing growth conditions and survival during antibiotic treatment and in the host. Functionally, binds Fe(3+) but not Fe(2+). Has ferroxidase activity, converts Fe(2+) into Fe(3+) and in the presence of H(2)O(2) prevents the generation of hydroxyl radicals (the Fenton reaction). Protects DNA from damage in the presence of FeSO(4) and H(2)O(2). May function in iron storage. May be involved in entry into human Schwann cells. This is DNA-binding protein HupB from Mycobacterium leprae (strain TN).